The following is a 2567-amino-acid chain: Highly reducing polyketide synthase sor1 (2567 aa).

Residues serine 14–aspartate 436 form the Ketosynthase family 3 (KS3) domain. Active-site for beta-ketoacyl synthase activity residues include cysteine 187, histidine 322, and histidine 359. The interval valine 550–leucine 841 is malonyl-CoA:ACP transacylase (MAT) domain. The interval histidine 939–serine 1079 is N-terminal hotdog fold. A dehydratase (DH) domain region spans residues histidine 939–serine 1249. One can recognise a PKS/mFAS DH domain in the interval histidine 939–leucine 1252. Residue histidine 971 is the Proton acceptor; for dehydratase activity of the active site. The C-terminal hotdog fold stretch occupies residues tyrosine 1095–leucine 1252. The Proton donor; for dehydratase activity role is filled by aspartate 1161. The tract at residues leucine 1426–leucine 1534 is methyltransferase (CMet) domain. The enoyl reductase (ER) domain stretch occupies residues phenylalanine 1852–leucine 2163. The interval alanine 2187–aspartate 2369 is ketoreductase (KR) domain. Residues glutamate 2481–serine 2558 form the Carrier domain. Serine 2518 carries the O-(pantetheine 4'-phosphoryl)serine modification.

It participates in secondary metabolite biosynthesis. Its function is as follows. Highly reducing polyketide synthase; part of the SOR gene cluster that mediates the biosynthesis of sorbicillinoids, a diverse group of yellow secondary metabolites that restrict growth of competing pathogenic fungi but not of bacteria. Sorbicillinoids biosynthesis requires the action of two PKSs. The SOR cluster is required for the production of trichodimerol and dihydrotrichotetronin, with sor2 being sufficient for production of trichodimerol, but not dihydrotrichotetronin in the light. Sor1 iteratively combines three acetyl units and the growing chain is modified by the ketoacyl reductase subunit, and optional by the enoyl reductase subunit in the second cycle. The polyketide is then handed over to the PKS sor2, which adds three more acetyl units, and two methyl groups. Sor2 releases an aldehyde, which undergoes spontaneous cyclization resulting in the formation of sorbicillin or 2',3'-dihydrosorbicillin. The monooxygenase sor5 oxidizes sorbicillin and 2',3'-dihydrosorbicillin to 2',3'-dihydrosorbicillinol and sorbicillinol, respectively. The oxidoreductase sor8 further converts sorbicillinol into oxosorbicillinol. Sorbicillinol is the building block for the other sorbicillinoids such as disorbicillinol, bisvertinolon, dihydrobisvertinolone, and dihydrotrichotetronine. This Hypocrea jecorina (strain QM6a) (Trichoderma reesei) protein is Highly reducing polyketide synthase sor1.